We begin with the raw amino-acid sequence, 150 residues long: Large ribosomal subunit protein bL9 (150 aa).

It belongs to the bacterial ribosomal protein bL9 family.

In terms of biological role, binds to the 23S rRNA. The protein is Large ribosomal subunit protein bL9 of Thioalkalivibrio sulfidiphilus (strain HL-EbGR7).